The primary structure comprises 505 residues: MKFTINFSANLTAFLLSVFLSVWMTPFIVKTLGVEAFGFVHLTQNVINYFSVITVALSSVVVRFFSVAAHRGEREKANAYISNYLAASVLISLLLLLPLAGSAFFIDRVMNVPQALLADVRLSILIGSVLFILTFLMAGFGAAPFYANRLYITSSIQAVQMLIRVLSVLLLFACFAPKIWQIQLAALAGAVIASVLSFYFFKKLIPWFSFRMKDLSFRTSKELFQAGAWSSVNQIGVLLFLQIDLLTANLMLGASASGKYAAIIQFPLLLRSLAGTVASLFAPIMTSYYSKGDMEGLMNYANKAVRLNGLLLALPAALLGGLAGPFLTIWLGPSFSTIAPLLFIHAGYLVVSLAFMPLFYIWTAFNQQKTPAIVTLLLGAVNVVLAVTLSGPAHLGLYGITLAGAISLILKNAIFTPLYVSRITGYKKHVFLKGIIGPLSAAVFAWTVCKAIQFIVKIDSWPSLIATGVTVSFCYAVFAFMLVCTKEERQLVLKRFRKTKGAVNL.

The next 14 helical transmembrane spans lie at A9–V29, Y49–A69, A86–I106, L122–A142, I156–A176, Q181–F201, I235–S255, A261–F281, L310–W330, L341–I361, P371–G391, L395–F415, I435–I455, and L464–C484.

It localises to the cell membrane. Functionally, may be involved in the production of the exopolysaccharide (EPS) component of the extracellular matrix during biofilm formation. EPS is responsible for the adhesion of chains of cells into bundles. This is an uncharacterized protein from Bacillus subtilis (strain 168).